A 305-amino-acid polypeptide reads, in one-letter code: MLKQRTIKSLVKTVGIGLHSGRKVTLTLRPAPADTGIVFTRVDLPEAVEIPVAASAIGDTRLASVLQKDGARVSTVEHLMSACAGLGIDNLYVDVDAEEIPIMDGSAASFVFLLQSAGIEEQNALKTFIRVKKAVEVREGDKLARLEPFFGFKLSFTIDFRHPAVDKTGQTFSIDFADTSYVREIARARTFGFAHEVEALREMGLARGGSLDNAIVLDEHRMLNNEELRYGDEFVRHKILDAIGDLYVVGHPLIGAYVANKSGHGLNNQLLRALLADQEAYELVTFDRVEEAPVAFLPQAQPAFA.

Zn(2+)-binding residues include histidine 78, histidine 237, and aspartate 241. Catalysis depends on histidine 264, which acts as the Proton donor.

This sequence belongs to the LpxC family. Requires Zn(2+) as cofactor.

The enzyme catalyses a UDP-3-O-[(3R)-3-hydroxyacyl]-N-acetyl-alpha-D-glucosamine + H2O = a UDP-3-O-[(3R)-3-hydroxyacyl]-alpha-D-glucosamine + acetate. Its pathway is glycolipid biosynthesis; lipid IV(A) biosynthesis; lipid IV(A) from (3R)-3-hydroxytetradecanoyl-[acyl-carrier-protein] and UDP-N-acetyl-alpha-D-glucosamine: step 2/6. Functionally, catalyzes the hydrolysis of UDP-3-O-myristoyl-N-acetylglucosamine to form UDP-3-O-myristoylglucosamine and acetate, the committed step in lipid A biosynthesis. The polypeptide is UDP-3-O-acyl-N-acetylglucosamine deacetylase (Cupriavidus necator (strain ATCC 17699 / DSM 428 / KCTC 22496 / NCIMB 10442 / H16 / Stanier 337) (Ralstonia eutropha)).